The primary structure comprises 81 residues: RNA-binding protein Hfq (81 aa).

In terms of domain architecture, Sm spans 10 to 69; the sequence is DPFLNTLRKEHIPVSIYLVNGIKLQGHIDSFDQYVVLLKNTVTQMVYKHAISTVVPARAV.

This sequence belongs to the Hfq family. Homohexamer.

In terms of biological role, RNA chaperone that binds small regulatory RNA (sRNAs) and mRNAs to facilitate mRNA translational regulation in response to envelope stress, environmental stress and changes in metabolite concentrations. Also binds with high specificity to tRNAs. This Nitrosospira multiformis (strain ATCC 25196 / NCIMB 11849 / C 71) protein is RNA-binding protein Hfq.